The sequence spans 304 residues: Urease accessory protein UreD (304 aa).

Belongs to the UreD family. In terms of assembly, ureD, UreF and UreG form a complex that acts as a GTP-hydrolysis-dependent molecular chaperone, activating the urease apoprotein by helping to assemble the nickel containing metallocenter of UreC. The UreE protein probably delivers the nickel.

The protein localises to the cytoplasm. Functionally, required for maturation of urease via the functional incorporation of the urease nickel metallocenter. The sequence is that of Urease accessory protein UreD from Haloquadratum walsbyi (strain DSM 16790 / HBSQ001).